We begin with the raw amino-acid sequence, 333 residues long: 4-hydroxy-3-methylbut-2-enyl diphosphate reductase (333 aa).

[4Fe-4S] cluster is bound at residue Cys34. (2E)-4-hydroxy-3-methylbut-2-enyl diphosphate is bound by residues His63 and His96. 2 residues coordinate dimethylallyl diphosphate: His63 and His96. The isopentenyl diphosphate site is built by His63 and His96. Cys118 lines the [4Fe-4S] cluster pocket. A (2E)-4-hydroxy-3-methylbut-2-enyl diphosphate-binding site is contributed by His146. His146 is a binding site for dimethylallyl diphosphate. Residue His146 coordinates isopentenyl diphosphate. The Proton donor role is filled by Glu148. Position 186 (Thr186) interacts with (2E)-4-hydroxy-3-methylbut-2-enyl diphosphate. Cys216 lines the [4Fe-4S] cluster pocket. Residues Ser244, Ser245, Asn246, and Ser289 each contribute to the (2E)-4-hydroxy-3-methylbut-2-enyl diphosphate site. Residues Ser244, Ser245, Asn246, and Ser289 each contribute to the dimethylallyl diphosphate site. Ser244, Ser245, Asn246, and Ser289 together coordinate isopentenyl diphosphate.

Belongs to the IspH family. [4Fe-4S] cluster is required as a cofactor.

It catalyses the reaction isopentenyl diphosphate + 2 oxidized [2Fe-2S]-[ferredoxin] + H2O = (2E)-4-hydroxy-3-methylbut-2-enyl diphosphate + 2 reduced [2Fe-2S]-[ferredoxin] + 2 H(+). The catalysed reaction is dimethylallyl diphosphate + 2 oxidized [2Fe-2S]-[ferredoxin] + H2O = (2E)-4-hydroxy-3-methylbut-2-enyl diphosphate + 2 reduced [2Fe-2S]-[ferredoxin] + 2 H(+). Its pathway is isoprenoid biosynthesis; dimethylallyl diphosphate biosynthesis; dimethylallyl diphosphate from (2E)-4-hydroxy-3-methylbutenyl diphosphate: step 1/1. It participates in isoprenoid biosynthesis; isopentenyl diphosphate biosynthesis via DXP pathway; isopentenyl diphosphate from 1-deoxy-D-xylulose 5-phosphate: step 6/6. Functionally, catalyzes the conversion of 1-hydroxy-2-methyl-2-(E)-butenyl 4-diphosphate (HMBPP) into a mixture of isopentenyl diphosphate (IPP) and dimethylallyl diphosphate (DMAPP). Acts in the terminal step of the DOXP/MEP pathway for isoprenoid precursor biosynthesis. The chain is 4-hydroxy-3-methylbut-2-enyl diphosphate reductase from Mycobacterium sp. (strain JLS).